Here is a 160-residue protein sequence, read N- to C-terminus: Cytochrome b6-f complex subunit 4 (160 aa).

Helical transmembrane passes span 36–56 (LLYI…GLAV), 95–115 (LLGI…PFIE), and 128–148 (IAMA…IGAC).

This sequence belongs to the cytochrome b family. PetD subfamily. The 4 large subunits of the cytochrome b6-f complex are cytochrome b6, subunit IV (17 kDa polypeptide, PetD), cytochrome f and the Rieske protein, while the 4 small subunits are PetG, PetL, PetM and PetN. The complex functions as a dimer.

The protein resides in the cellular thylakoid membrane. Component of the cytochrome b6-f complex, which mediates electron transfer between photosystem II (PSII) and photosystem I (PSI), cyclic electron flow around PSI, and state transitions. This Prochlorococcus marinus (strain MIT 9303) protein is Cytochrome b6-f complex subunit 4.